The chain runs to 550 residues: Transcription factor 7-like 1-D (550 aa).

Residues methionine 1–serine 61 are interaction with CTNNB1-A. Disordered stretches follow at residues methionine 1–arginine 77, glycine 182–proline 212, tryptophan 390–threonine 473, and alanine 488–isoleucine 514. Composition is skewed to basic and acidic residues over residues glutamate 17–proline 32 and serine 52–arginine 77. An interaction with AES and TLE4-A region spans residues leucine 109–valine 311. Positions isoleucine 323 to serine 391 form a DNA-binding region, HMG box. Positions lysine 406–threonine 415 are enriched in basic and acidic residues. Residues glutamine 407 to aspartate 550 form an interaction with CTBP-B region. Residues serine 444–proline 455 show a composition bias toward low complexity.

It belongs to the TCF/LEF family. Interacts with csnk1e, ctnnb1-A, ctbp-B, dact1-A and gsk3b. May interact with ase and tle4-A. Phosphorylated. Phosphorylation by csnk1e promotes binding to ctnnb1-A while phosphorylation by gsk3b may reverse this effect.

Its subcellular location is the nucleus. Functionally, participates in the Wnt signaling pathway. Binds to DNA and acts as a repressor in the absence of ctnnb1-A and possibly ctnnb1-B, and as an activator in the presence of these proteins. Required early in development for the establishment of the dorsal body axis in response to maternal Wnt signaling. This is Transcription factor 7-like 1-D (tcf7l1-d) from Xenopus laevis (African clawed frog).